We begin with the raw amino-acid sequence, 164 residues long: FMN reductase (NADH) RutF (164 aa).

The protein belongs to the non-flavoprotein flavin reductase family. RutF subfamily.

It carries out the reaction FMNH2 + NAD(+) = FMN + NADH + 2 H(+). Its function is as follows. Catalyzes the reduction of FMN to FMNH2 which is used to reduce pyrimidine by RutA via the Rut pathway. This Escherichia coli (strain K12 / MC4100 / BW2952) protein is FMN reductase (NADH) RutF.